A 608-amino-acid chain; its full sequence is Glutamine--fructose-6-phosphate aminotransferase [isomerizing] (608 aa).

Cys2 (nucleophile; for GATase activity) is an active-site residue. Residues 2-217 (CGIVGIVGNQ…DGDWAVIGKT (216 aa)) form the Glutamine amidotransferase type-2 domain. SIS domains lie at 281-422 (ISDA…ARGT) and 456-598 (LSRE…VDQP). Lys603 functions as the For Fru-6P isomerization activity in the catalytic mechanism.

In terms of assembly, homodimer.

It localises to the cytoplasm. It carries out the reaction D-fructose 6-phosphate + L-glutamine = D-glucosamine 6-phosphate + L-glutamate. Its function is as follows. Catalyzes the first step in hexosamine metabolism, converting fructose-6P into glucosamine-6P using glutamine as a nitrogen source. The polypeptide is Glutamine--fructose-6-phosphate aminotransferase [isomerizing] (Rhizobium meliloti (strain 1021) (Ensifer meliloti)).